Reading from the N-terminus, the 118-residue chain is MKKRNQYSITVDVNGGEYNQEFVILADSLSKVGRDKIIADGVTIQFNDQILELNSNKEDSNDYYKGQTLTVKEDCLNNFWKGGTVTVEDVDIHRGILIDGVVYLEKQVVDKYFSKEEE.

This Bacillus subtilis (strain 168) protein is SPbeta prophage-derived uncharacterized protein YoqR (yoqR).